The primary structure comprises 385 residues: Beta sliding clamp (385 aa).

This sequence belongs to the beta sliding clamp family. In terms of assembly, forms a ring-shaped head-to-tail homodimer around DNA which binds and tethers DNA polymerases and other proteins to the DNA. The DNA replisome complex has a single clamp-loading complex (3 tau and 1 each of delta, delta', psi and chi subunits) which binds 3 Pol III cores (1 core on the leading strand and 2 on the lagging strand) each with a beta sliding clamp dimer. Additional proteins in the replisome are other copies of gamma, psi and chi, Ssb, DNA helicase and RNA primase.

The protein resides in the cytoplasm. Its function is as follows. Confers DNA tethering and processivity to DNA polymerases and other proteins. Acts as a clamp, forming a ring around DNA (a reaction catalyzed by the clamp-loading complex) which diffuses in an ATP-independent manner freely and bidirectionally along dsDNA. Initially characterized for its ability to contact the catalytic subunit of DNA polymerase III (Pol III), a complex, multichain enzyme responsible for most of the replicative synthesis in bacteria; Pol III exhibits 3'-5' exonuclease proofreading activity. The beta chain is required for initiation of replication as well as for processivity of DNA replication. This Borreliella burgdorferi (strain ATCC 35210 / DSM 4680 / CIP 102532 / B31) (Borrelia burgdorferi) protein is Beta sliding clamp (dnaN).